We begin with the raw amino-acid sequence, 281 residues long: Beta-etherase (281 aa).

The region spanning 11-87 (DLQLESGCTI…YLDEKYPDRP (77 aa)) is the GST N-terminal domain. The disordered stretch occupies residues 244-281 (GDPEPFVRQTGPAGAGGQALNKGPQTTKMPPRVAEKAD).

This sequence belongs to the GST superfamily.

The protein resides in the cell inner membrane. In terms of biological role, able to degrade various dimeric lignin compounds. Catalyzes the unique and reductive cleavage of arylglycerol-beta-aryl ether. The sequence is that of Beta-etherase (ligE) from Sphingobium sp. (strain NBRC 103272 / SYK-6).